The following is a 367-amino-acid chain: Acryloyl-CoA reductase electron transfer subunit beta (367 aa).

305-333 (VYVALGISGAIQHKAGMQDSELIIAVNKD) contributes to the FAD binding site.

Heterohexadecamer; tetramer of tetramers. Each tetramer is composed of 2 alpha (AcrC), a beta (AcrA) and a gamma (AcrB) subunit.

Its subcellular location is the cytoplasm. Functionally, part of the ETF-acryloyl-CoA reductase complex involved in the pathway of L-alanine fermentation. The electron transfer flavoprotein (ETF) serves as a specific electron acceptor for acryloyl-CoA reductase. In Anaerotignum propionicum (Clostridium propionicum), this protein is Acryloyl-CoA reductase electron transfer subunit beta (acrA).